We begin with the raw amino-acid sequence, 271 residues long: S-adenosylmethionine decarboxylase proenzyme (271 aa).

The Schiff-base intermediate with substrate; via pyruvic acid role is filled by serine 121. Serine 121 carries the pyruvic acid (Ser); by autocatalysis modification. Histidine 126 (proton acceptor; for processing activity) is an active-site residue. Cysteine 149 functions as the Proton donor; for catalytic activity in the catalytic mechanism.

Belongs to the prokaryotic AdoMetDC family. Type 2 subfamily. Heterooctamer of four alpha and four beta chains arranged as a tetramer of alpha/beta heterodimers. Requires pyruvate as cofactor. Post-translationally, is synthesized initially as an inactive proenzyme. Formation of the active enzyme involves a self-maturation process in which the active site pyruvoyl group is generated from an internal serine residue via an autocatalytic post-translational modification. Two non-identical subunits are generated from the proenzyme in this reaction, and the pyruvate is formed at the N-terminus of the alpha chain, which is derived from the carboxyl end of the proenzyme. The post-translation cleavage follows an unusual pathway, termed non-hydrolytic serinolysis, in which the side chain hydroxyl group of the serine supplies its oxygen atom to form the C-terminus of the beta chain, while the remainder of the serine residue undergoes an oxidative deamination to produce ammonia and the pyruvoyl group blocking the N-terminus of the alpha chain.

The catalysed reaction is S-adenosyl-L-methionine + H(+) = S-adenosyl 3-(methylsulfanyl)propylamine + CO2. It functions in the pathway amine and polyamine biosynthesis; S-adenosylmethioninamine biosynthesis; S-adenosylmethioninamine from S-adenosyl-L-methionine: step 1/1. Its function is as follows. Catalyzes the decarboxylation of S-adenosylmethionine to S-adenosylmethioninamine (dcAdoMet), the propylamine donor required for the synthesis of the polyamines spermine and spermidine from the diamine putrescine. This Clostridium perfringens (strain SM101 / Type A) protein is S-adenosylmethionine decarboxylase proenzyme.